A 288-amino-acid polypeptide reads, in one-letter code: Homoserine kinase (288 aa).

Position 79-89 (79-89 (PPARGLGSSSA)) interacts with ATP.

It belongs to the GHMP kinase family. Homoserine kinase subfamily.

The protein resides in the cytoplasm. The enzyme catalyses L-homoserine + ATP = O-phospho-L-homoserine + ADP + H(+). It participates in amino-acid biosynthesis; L-threonine biosynthesis; L-threonine from L-aspartate: step 4/5. Catalyzes the ATP-dependent phosphorylation of L-homoserine to L-homoserine phosphate. The polypeptide is Homoserine kinase (Listeria monocytogenes serovar 1/2a (strain ATCC BAA-679 / EGD-e)).